A 95-amino-acid polypeptide reads, in one-letter code: 1,2-phenylacetyl-CoA epoxidase, subunit B (95 aa).

In terms of assembly, homotrimer. Forms a stable heterodimer with PaaC. Probably forms an oligomer with PaaAC.

The protein operates within aromatic compound metabolism; phenylacetate degradation. In terms of biological role, component of 1,2-phenylacetyl-CoA epoxidase multicomponent enzyme system which catalyzes the reduction of phenylacetyl-CoA (PA-CoA) to form 1,2-epoxyphenylacetyl-CoA. The subunit B may play a regulatory role or be directly involved in electron transport. The polypeptide is 1,2-phenylacetyl-CoA epoxidase, subunit B (paaB) (Escherichia coli (strain K12)).